Consider the following 298-residue polypeptide: 4-hydroxy-tetrahydrodipicolinate synthase (298 aa).

Position 48 (T48) interacts with pyruvate. The active-site Proton donor/acceptor is Y137. The active-site Schiff-base intermediate with substrate is the K166. I207 provides a ligand contact to pyruvate.

It belongs to the DapA family. As to quaternary structure, homotetramer; dimer of dimers.

It localises to the cytoplasm. It carries out the reaction L-aspartate 4-semialdehyde + pyruvate = (2S,4S)-4-hydroxy-2,3,4,5-tetrahydrodipicolinate + H2O + H(+). The protein operates within amino-acid biosynthesis; L-lysine biosynthesis via DAP pathway; (S)-tetrahydrodipicolinate from L-aspartate: step 3/4. In terms of biological role, catalyzes the condensation of (S)-aspartate-beta-semialdehyde [(S)-ASA] and pyruvate to 4-hydroxy-tetrahydrodipicolinate (HTPA). In Campylobacter jejuni subsp. jejuni serotype O:2 (strain ATCC 700819 / NCTC 11168), this protein is 4-hydroxy-tetrahydrodipicolinate synthase.